Reading from the N-terminus, the 423-residue chain is Ferrochelatase, mitochondrial (423 aa).

The N-terminal 29 residues, 1–29 (MISRKIISTINSKTFYNKSLSYCTVNNNK), are a transit peptide targeting the mitochondrion. Cys-173 contributes to the [2Fe-2S] cluster binding site. Catalysis depends on residues His-207 and Asp-380. Cys-401, Cys-404, and Cys-411 together coordinate [2Fe-2S] cluster.

The protein belongs to the ferrochelatase family. As to quaternary structure, monomer. [2Fe-2S] cluster serves as cofactor.

The protein localises to the mitochondrion inner membrane. It catalyses the reaction heme b + 2 H(+) = protoporphyrin IX + Fe(2+). The protein operates within porphyrin-containing compound metabolism; protoheme biosynthesis; protoheme from protoporphyrin-IX: step 1/1. In terms of biological role, catalyzes the ferrous insertion into protoporphyrin IX. The chain is Ferrochelatase, mitochondrial (hemH) from Dictyostelium discoideum (Social amoeba).